The following is a 408-amino-acid chain: GTPase Obg (408 aa).

Residues 1–159 enclose the Obg domain; the sequence is MKFFDEARIE…RNLHLELKVL (159 aa). The 175-residue stretch at 160-334 folds into the OBG-type G domain; sequence ADVGLLGMPN…LIFALQDFLD (175 aa). Residues 166–173, 191–195, 213–216, 284–287, and 315–317 each bind GTP; these read GMPNAGKS, FTTLQ, DIPG, NKLD, and SAL. Mg(2+) is bound by residues serine 173 and threonine 193. The disordered stretch occupies residues 385-408; the sequence is AEDALAEDALDDDADGEDADPNAR.

This sequence belongs to the TRAFAC class OBG-HflX-like GTPase superfamily. OBG GTPase family. As to quaternary structure, monomer. It depends on Mg(2+) as a cofactor.

The protein localises to the cytoplasm. An essential GTPase which binds GTP, GDP and possibly (p)ppGpp with moderate affinity, with high nucleotide exchange rates and a fairly low GTP hydrolysis rate. Plays a role in control of the cell cycle, stress response, ribosome biogenesis and in those bacteria that undergo differentiation, in morphogenesis control. The polypeptide is GTPase Obg (Azoarcus sp. (strain BH72)).